The chain runs to 236 residues: Small ribosomal subunit protein uS2c (236 aa).

This sequence belongs to the universal ribosomal protein uS2 family.

It is found in the plastid. It localises to the chloroplast. This Triticum aestivum (Wheat) protein is Small ribosomal subunit protein uS2c (rps2).